Consider the following 211-residue polypeptide: tRNA (guanine-N(7)-)-methyltransferase (211 aa).

Positions 43, 68, 95, and 117 each coordinate S-adenosyl-L-methionine. Residue Asp-117 is part of the active site. Residues Lys-121, Asp-153, and 190 to 193 (TEYE) contribute to the substrate site.

It belongs to the class I-like SAM-binding methyltransferase superfamily. TrmB family.

The enzyme catalyses guanosine(46) in tRNA + S-adenosyl-L-methionine = N(7)-methylguanosine(46) in tRNA + S-adenosyl-L-homocysteine. It functions in the pathway tRNA modification; N(7)-methylguanine-tRNA biosynthesis. Functionally, catalyzes the formation of N(7)-methylguanine at position 46 (m7G46) in tRNA. This chain is tRNA (guanine-N(7)-)-methyltransferase, found in Alkaliphilus oremlandii (strain OhILAs) (Clostridium oremlandii (strain OhILAs)).